The primary structure comprises 577 residues: 9-cis-epoxycarotenoid dioxygenase NCED6, chloroplastic (577 aa).

Positions 1–25 are disordered; it reads MQHSLRSDLLPTKTSPRSHLLPQPK. Fe cation-binding residues include histidine 276, histidine 325, histidine 390, and histidine 563.

The protein belongs to the carotenoid oxygenase family. The cofactor is Fe(2+). Expressed before fertilization in male and female gametophytes, and then immediately after pollination, restricted to seed endosperm.

It is found in the plastid. It localises to the chloroplast stroma. The catalysed reaction is a 9-cis-epoxycarotenoid + O2 = a 12'-apo-carotenal + 2-cis,4-trans-xanthoxin. The enzyme catalyses 9-cis-violaxanthin + O2 = (3S,5R,6S)-5,6-epoxy-3-hydroxy-5,6-dihydro-12'-apo-beta-caroten-12'-al + 2-cis,4-trans-xanthoxin. It carries out the reaction 9'-cis-neoxanthin + O2 = (3S,5R,6R)-3,5-dihydroxy-6,7-didehydro-5,6-dihydro-12'-apo-beta-caroten-12'-al + 2-cis,4-trans-xanthoxin. Its function is as follows. Has a 11,12(11',12') 9-cis epoxycarotenoid cleavage activity. Catalyzes the first step of abscisic-acid biosynthesis from carotenoids. Contributes probably to abscisic acid synthesis for the induction of seed dormancy. This Arabidopsis thaliana (Mouse-ear cress) protein is 9-cis-epoxycarotenoid dioxygenase NCED6, chloroplastic (NCED6).